Consider the following 246-residue polypeptide: UDP-N-acetyl-D-mannosaminuronic acid transferase (246 aa).

This sequence belongs to the glycosyltransferase 26 family.

It carries out the reaction UDP-N-acetyl-alpha-D-mannosaminouronate + N-acetyl-alpha-D-glucosaminyl-di-trans,octa-cis-undecaprenyl diphosphate = beta-D-ManNAcA-(1-&gt;4)-alpha-D-GlcNAc-di-trans,octa-cis-undecaprenyl diphosphate + UDP + H(+). Its pathway is bacterial outer membrane biogenesis; enterobacterial common antigen biosynthesis. Functionally, catalyzes the synthesis of Und-PP-GlcNAc-ManNAcA (Lipid II), the second lipid-linked intermediate involved in enterobacterial common antigen (ECA) synthesis. The protein is UDP-N-acetyl-D-mannosaminuronic acid transferase of Escherichia coli O157:H7.